Consider the following 464-residue polypeptide: Cysteine--tRNA ligase (464 aa).

Cys-28 is a binding site for Zn(2+). A 'HIGH' region motif is present at residues 30–40 (PTVYDHSHIGH). Residues Cys-205, His-230, and Glu-234 each coordinate Zn(2+). A 'KMSKS' region motif is present at residues 263-267 (KMSKS). An ATP-binding site is contributed by Lys-266.

Belongs to the class-I aminoacyl-tRNA synthetase family. Zn(2+) serves as cofactor.

The protein resides in the cytoplasm. The catalysed reaction is tRNA(Cys) + L-cysteine + ATP = L-cysteinyl-tRNA(Cys) + AMP + diphosphate. The sequence is that of Cysteine--tRNA ligase from Ignicoccus hospitalis (strain KIN4/I / DSM 18386 / JCM 14125).